The sequence spans 385 residues: DnaJ homolog subfamily C member 28 (385 aa).

Residues 48 to 132 (EYYRLLNLDE…EGKFKYNTPQ (85 aa)) form the J domain. A coiled-coil region spans residues 261–318 (KEIKDTIEQLREALLMSRKKLGNPLSPTEQKQWAQVCEQFQEKIRKLNKRINDFNLIV).

Functionally, may have a role in protein folding or as a chaperone. The chain is DnaJ homolog subfamily C member 28 (Dnajc28) from Mus musculus (Mouse).